A 457-amino-acid chain; its full sequence is Metal tolerance protein C4 (457 aa).

Topologically, residues 1–115 (MQSSHRILSR…IEINDQHSQR (115 aa)) are cytoplasmic. A helical membrane pass occupies residues 116 to 136 (AVTTALWCNFLVFSLKFGVWW). Topologically, residues 137 to 141 (TSSSH) are vacuolar. Residues 142-162 (VIMAEVVHSVADFANQALLAY) traverse the membrane as a helical segment. Residues 163–183 (GLSSSRRAPDALHPYGYSKER) are Cytoplasmic-facing. A helical transmembrane segment spans residues 184 to 204 (FVWSLISAVGIFCLGSGATIV). Residues 205–220 (NGVQNLWTSSPPPNME) lie on the Vacuolar side of the membrane. The helical transmembrane segment at 221–241 (LAAVVIGGSFLIEGASLLVAI) threads the bilayer. Topologically, residues 242-267 (QSVKKGAAQEGMTIRDYIWRGHDPTS) are cytoplasmic. The helical transmembrane segment at 268-288 (VAVMTEDGAAVAGLAIAAASL) threads the bilayer. Over 289–297 (VAVRMTGNP) the chain is Vacuolar. A helical transmembrane segment spans residues 298-318 (IYDPIGSIVVGNLLGMVAIFL). Topologically, residues 319-457 (IQRNRHALIG…HNPTPTDPSL (139 aa)) are cytoplasmic.

Belongs to the cation diffusion facilitator (CDF) transporter (TC 2.A.4) family.

The protein resides in the vacuole membrane. In terms of biological role, involved in sequestration of excess metal in the cytoplasm into vacuoles to maintain metal homeostasis. This Arabidopsis thaliana (Mouse-ear cress) protein is Metal tolerance protein C4 (MTPC4).